The chain runs to 461 residues: Isthmin-1 (461 aa).

The signal sequence occupies residues 1–26 (MVRLAAELLLLLGLLLLTLHITVLRS). Asn-33 is a glycosylation site (N-linked (GlcNAc...) asparagine). Residues 40 to 58 (QDSRVAENNVNADSSSSVQ) are compositionally biased toward polar residues. 3 disordered regions span residues 40 to 62 (QDSR…LGPG), 73 to 92 (ASQP…RDGP), and 128 to 188 (EGSE…NFLK). Over residues 131–141 (EPEKGMRKENK) the composition is skewed to basic and acidic residues. Residues 156-165 (SSSSSSSSVS) show a composition bias toward low complexity. The region spanning 215–259 (DGEGDWSAWSPCSVSCGNGNQKRTRSCGYACTATESRTCDMPSCP) is the TSP type-1 domain. 3 cysteine pairs are disulfide-bonded: Cys-226-Cys-253, Cys-230-Cys-258, and Cys-241-Cys-245. Asn-282 carries an N-linked (GlcNAc...) asparagine glycan. The AMOP domain maps to 286-449 (LFGVDTDSCE…QKCAENPQDE (164 aa)).

This sequence belongs to the isthmin family.

The protein resides in the secreted. Functionally, may specifically influence certain angiogenesis process. This Danio rerio (Zebrafish) protein is Isthmin-1 (ism1).